Reading from the N-terminus, the 152-residue chain is UPF0756 membrane protein CA_C0092 (152 aa).

Helical transmembrane passes span 5–25, 50–70, 82–102, and 117–137; these read IILV…VAIS, MFWG…QGNV, FVGI…GVGL, and LILG…GPLI.

Belongs to the UPF0756 family.

The protein resides in the cell membrane. In Clostridium acetobutylicum (strain ATCC 824 / DSM 792 / JCM 1419 / IAM 19013 / LMG 5710 / NBRC 13948 / NRRL B-527 / VKM B-1787 / 2291 / W), this protein is UPF0756 membrane protein CA_C0092.